We begin with the raw amino-acid sequence, 602 residues long: Elongation factor 4 (602 aa).

Positions 7–189 (RNIRNFSIIA…AIVHRIPPPK (183 aa)) constitute a tr-type G domain. Residues 19 to 24 (DHGKST) and 136 to 139 (NKID) contribute to the GTP site.

This sequence belongs to the TRAFAC class translation factor GTPase superfamily. Classic translation factor GTPase family. LepA subfamily.

It is found in the cell inner membrane. It catalyses the reaction GTP + H2O = GDP + phosphate + H(+). Its function is as follows. Required for accurate and efficient protein synthesis under certain stress conditions. May act as a fidelity factor of the translation reaction, by catalyzing a one-codon backward translocation of tRNAs on improperly translocated ribosomes. Back-translocation proceeds from a post-translocation (POST) complex to a pre-translocation (PRE) complex, thus giving elongation factor G a second chance to translocate the tRNAs correctly. Binds to ribosomes in a GTP-dependent manner. This chain is Elongation factor 4, found in Stenotrophomonas maltophilia (strain R551-3).